A 692-amino-acid chain; its full sequence is Ribonuclease R (692 aa).

Residues 204 to 525 (RKDLRDLLCF…IVHRLLFHPL (322 aa)) enclose the RNB domain. The S1 motif domain occupies 563–648 (KKFLDEQPAT…LTQAIEWTLI (86 aa)). Residues 651–692 (KERSSSKKKKAKAKSNATQVKKKSSSKKKKAVSKAKKNRGGK) are disordered. Basic residues predominate over residues 670–692 (VKKKSSSKKKKAVSKAKKNRGGK).

It belongs to the RNR ribonuclease family. RNase R subfamily.

It localises to the cytoplasm. The catalysed reaction is Exonucleolytic cleavage in the 3'- to 5'-direction to yield nucleoside 5'-phosphates.. Its function is as follows. 3'-5' exoribonuclease that releases 5'-nucleoside monophosphates and is involved in maturation of structured RNAs. The polypeptide is Ribonuclease R (Chlamydia muridarum (strain MoPn / Nigg)).